The following is a 198-amino-acid chain: MEVKKPTIKSIPYEDFKDNEYLENMVKQLNEGGTKVLVGCLDDLINWGRSNSLWPLTFATSCCGIEFMAVGAARYDFARFGFEVARASPRQADMIMVAGTITHKMAPVLKRLYDQMADPKYVIAVGGCAISGGPFKKSYHVLNGVDKILPVDVYIPGCPPRPEALLYGMIQLQRKVKLEKFFGGVNRKENEPQNPEQA.

The [4Fe-4S] cluster site is built by C62, C63, C128, and C158.

The protein belongs to the complex I 20 kDa subunit family. NDH-1 is composed of 14 different subunits. Subunits NuoB, C, D, E, F, and G constitute the peripheral sector of the complex. [4Fe-4S] cluster is required as a cofactor.

It is found in the cell inner membrane. It carries out the reaction a quinone + NADH + 5 H(+)(in) = a quinol + NAD(+) + 4 H(+)(out). Its function is as follows. NDH-1 shuttles electrons from NADH, via FMN and iron-sulfur (Fe-S) centers, to quinones in the respiratory chain. The immediate electron acceptor for the enzyme in this species is believed to be a menaquinone. Couples the redox reaction to proton translocation (for every two electrons transferred, four hydrogen ions are translocated across the cytoplasmic membrane), and thus conserves the redox energy in a proton gradient. This is NADH-quinone oxidoreductase subunit B from Phocaeicola vulgatus (strain ATCC 8482 / DSM 1447 / JCM 5826 / CCUG 4940 / NBRC 14291 / NCTC 11154) (Bacteroides vulgatus).